Reading from the N-terminus, the 190-residue chain is ATP synthase subunit delta (190 aa).

This sequence belongs to the ATPase delta chain family. As to quaternary structure, F-type ATPases have 2 components, F(1) - the catalytic core - and F(0) - the membrane proton channel. F(1) has five subunits: alpha(3), beta(3), gamma(1), delta(1), epsilon(1). F(0) has three main subunits: a(1), b(2) and c(10-14). The alpha and beta chains form an alternating ring which encloses part of the gamma chain. F(1) is attached to F(0) by a central stalk formed by the gamma and epsilon chains, while a peripheral stalk is formed by the delta and b chains.

Its subcellular location is the cell inner membrane. Its function is as follows. F(1)F(0) ATP synthase produces ATP from ADP in the presence of a proton or sodium gradient. F-type ATPases consist of two structural domains, F(1) containing the extramembraneous catalytic core and F(0) containing the membrane proton channel, linked together by a central stalk and a peripheral stalk. During catalysis, ATP synthesis in the catalytic domain of F(1) is coupled via a rotary mechanism of the central stalk subunits to proton translocation. Functionally, this protein is part of the stalk that links CF(0) to CF(1). It either transmits conformational changes from CF(0) to CF(1) or is implicated in proton conduction. This Methylobacterium radiotolerans (strain ATCC 27329 / DSM 1819 / JCM 2831 / NBRC 15690 / NCIMB 10815 / 0-1) protein is ATP synthase subunit delta.